The following is a 273-amino-acid chain: 4-hydroxy-tetrahydrodipicolinate reductase (273 aa).

Residues 12–17 (GAGGRM) and glutamate 38 contribute to the NAD(+) site. Position 39 (arginine 39) interacts with NADP(+). NAD(+)-binding positions include 102-104 (GTT) and 126-129 (AANF). Histidine 159 (proton donor/acceptor) is an active-site residue. Position 160 (histidine 160) interacts with (S)-2,3,4,5-tetrahydrodipicolinate. Lysine 163 serves as the catalytic Proton donor. A (S)-2,3,4,5-tetrahydrodipicolinate-binding site is contributed by 169 to 170 (GT).

The protein belongs to the DapB family. As to quaternary structure, homotetramer.

The protein resides in the cytoplasm. It carries out the reaction (S)-2,3,4,5-tetrahydrodipicolinate + NAD(+) + H2O = (2S,4S)-4-hydroxy-2,3,4,5-tetrahydrodipicolinate + NADH + H(+). The catalysed reaction is (S)-2,3,4,5-tetrahydrodipicolinate + NADP(+) + H2O = (2S,4S)-4-hydroxy-2,3,4,5-tetrahydrodipicolinate + NADPH + H(+). Its pathway is amino-acid biosynthesis; L-lysine biosynthesis via DAP pathway; (S)-tetrahydrodipicolinate from L-aspartate: step 4/4. Catalyzes the conversion of 4-hydroxy-tetrahydrodipicolinate (HTPA) to tetrahydrodipicolinate. This Proteus mirabilis (strain HI4320) protein is 4-hydroxy-tetrahydrodipicolinate reductase.